Here is a 634-residue protein sequence, read N- to C-terminus: Threonine--tRNA ligase (634 aa).

Positions 1–61 constitute a TGS domain; the sequence is MISLKFPNNE…SESGEFRLYT (61 aa). The tract at residues 242-532 is catalytic; sequence DHRKIGQELD…LIEHYAGAFP (291 aa). Cys333, His384, and His509 together coordinate Zn(2+).

It belongs to the class-II aminoacyl-tRNA synthetase family. Homodimer. It depends on Zn(2+) as a cofactor.

Its subcellular location is the cytoplasm. The enzyme catalyses tRNA(Thr) + L-threonine + ATP = L-threonyl-tRNA(Thr) + AMP + diphosphate + H(+). In terms of biological role, catalyzes the attachment of threonine to tRNA(Thr) in a two-step reaction: L-threonine is first activated by ATP to form Thr-AMP and then transferred to the acceptor end of tRNA(Thr). Also edits incorrectly charged L-seryl-tRNA(Thr). The polypeptide is Threonine--tRNA ligase (Carboxydothermus hydrogenoformans (strain ATCC BAA-161 / DSM 6008 / Z-2901)).